Reading from the N-terminus, the 116-residue chain is Peptidyl-tRNA hydrolase (116 aa).

Belongs to the PTH2 family.

The protein localises to the cytoplasm. The enzyme catalyses an N-acyl-L-alpha-aminoacyl-tRNA + H2O = an N-acyl-L-amino acid + a tRNA + H(+). Functionally, the natural substrate for this enzyme may be peptidyl-tRNAs which drop off the ribosome during protein synthesis. The polypeptide is Peptidyl-tRNA hydrolase (Methanococcus maripaludis (strain C6 / ATCC BAA-1332)).